A 387-amino-acid chain; its full sequence is 3-ketoacyl-CoA thiolase (387 aa).

Residue Cys-91 is the Acyl-thioester intermediate of the active site. Catalysis depends on proton acceptor residues His-343 and Cys-373.

Belongs to the thiolase-like superfamily. Thiolase family. Heterotetramer of two alpha chains (FadB) and two beta chains (FadA).

The protein localises to the cytoplasm. The catalysed reaction is an acyl-CoA + acetyl-CoA = a 3-oxoacyl-CoA + CoA. It functions in the pathway lipid metabolism; fatty acid beta-oxidation. Functionally, catalyzes the final step of fatty acid oxidation in which acetyl-CoA is released and the CoA ester of a fatty acid two carbons shorter is formed. This Escherichia coli O9:H4 (strain HS) protein is 3-ketoacyl-CoA thiolase.